Reading from the N-terminus, the 182-residue chain is Gas vesicle protein H1 (182 aa).

A compositionally biased stretch (acidic residues) spans 1–11 (MVPDENDDASD). 2 disordered regions span residues 1-21 (MVPDENDDASDDQSSQLSGLL) and 65-106 (GRAD…GGTS). Positions 12–21 (DQSSQLSGLL) are enriched in low complexity. Residues 92 to 101 (TTEDSIHVET) show a composition bias toward basic and acidic residues.

Belongs to the gas vesicle GvpH family. GvpF to GvpM interact with each other in vitro, and may form multi-subunit complex(es). Interacts with GvpC1. Might interact with GvpA1.

It is found in the cytoplasm. Its subcellular location is the gas vesicle. In terms of biological role, proteins GvpF to GvpM might be involved in nucleating gas vesicle formation. May be important for the stability of gas vesicles. Gas vesicles are hollow, gas filled proteinaceous nanostructures found in several microbial planktonic microorganisms. They allow positioning of halobacteria at the optimal depth for growth in the poorly aerated, shallow brine pools of their habitat. Functionally, expression of a 9.5 kb p-vac DNA fragment containing 2 divergently transcribed regions (gvpD-gvpE-gvpF-gvpG-gvpH-gvpI-gvpJ-gvpK-gvpL-gvpM and gvpA-gvpC-gvpN-gvpO) allows H.volcanii to produce gas vesicles. A similar region restores gas vesicle production in H.halobium without the p-vac locus, but it still has the c-vac locus. This chain is Gas vesicle protein H1 (gvpH11), found in Halobacterium salinarum (strain ATCC 700922 / JCM 11081 / NRC-1) (Halobacterium halobium).